The chain runs to 105 residues: Late embryogenesis abundant protein Lea5-A (105 aa).

This sequence belongs to the LEA type 3 family.

The sequence is that of Late embryogenesis abundant protein Lea5-A (LEA5-A) from Gossypium hirsutum (Upland cotton).